Reading from the N-terminus, the 134-residue chain is MADTFLLKIVTPDKDIFNGNIKRIFLKNSVGRLEILANHANMVTSTISSIVEFTDADGKDRKLFISKGIASIFNNEMTIFSESAEFSDNIDLNRAEKAKERAEKRLLEGNKYDKERAELALLRSIERINLKKMN.

This sequence belongs to the ATPase epsilon chain family. F-type ATPases have 2 components, CF(1) - the catalytic core - and CF(0) - the membrane proton channel. CF(1) has five subunits: alpha(3), beta(3), gamma(1), delta(1), epsilon(1). CF(0) has three main subunits: a, b and c.

Its subcellular location is the cell membrane. Functionally, produces ATP from ADP in the presence of a proton gradient across the membrane. The sequence is that of ATP synthase epsilon chain from Clostridium botulinum (strain Eklund 17B / Type B).